A 745-amino-acid polypeptide reads, in one-letter code: 1,4-alpha-glucan branching enzyme GlgB (745 aa).

The Nucleophile role is filled by D416. E469 serves as the catalytic Proton donor.

Belongs to the glycosyl hydrolase 13 family. GlgB subfamily. Monomer.

The enzyme catalyses Transfers a segment of a (1-&gt;4)-alpha-D-glucan chain to a primary hydroxy group in a similar glucan chain.. It participates in glycan biosynthesis; glycogen biosynthesis. Catalyzes the formation of the alpha-1,6-glucosidic linkages in glycogen by scission of a 1,4-alpha-linked oligosaccharide from growing alpha-1,4-glucan chains and the subsequent attachment of the oligosaccharide to the alpha-1,6 position. This chain is 1,4-alpha-glucan branching enzyme GlgB, found in Shewanella sp. (strain MR-4).